Here is a 704-residue protein sequence, read N- to C-terminus: MAEAAEPEGVAPGPQGPPEVPAPLAERPGEPGAAGGEAEGPEGSEGAEEAPRGAAAVKEAGGGGPDRGPEAEARGTRGAHGETEAEEGAPEGAEVPQGGEETSGAQQVEGASPGRGAQGEPRGEAQREPEDSAAPERQEEAEQRPEVPEGSASGEAGDSVDAEGPLGDNIEAEGPAGDSVEAEGRVGDSVDAEGPAGDSVDAEGPLGDNIQAEGPAGDSVDAEGRVGDSVDAEGPAGDSVDAEGRVGDSVEAGDPAGDGVEAGVPAGDSVEAEGPAGDSMDAEGPAGRARRVSGEPQQSGDGSLSPQAEAIEVAAGESAGRSPGELAWDAAEEAEVPGVKGSEEAAPGDARADAGEDRVGDGPQQEPGEDEERRERSPEGPREEEAAGGEEESPDSSPHGEASRGAAEPEAQLSNHLAEEGPAEGSGEAARVNGRREDGEASEPRALGQEHDITLFVKVKLTALGCSRIAIKKYLRAGYDGESIGNCPFSQRLFMILWLKGVIFNVTTVDLKRKPADLQNLAPGTNPPFMTFDGEVKTDVNKIEEFLEEKLAPPRYPKLGTQHPESNSAGNDVFAKFSAFIKNTKKDANEIHEKNLLKALRKLDNYLNSPLPDEIDAYSTEDVTVSGRKFLDGDELTLADCNLLPKLHIIKIVAKKYRDFEFPSEMTGIWRYLNNAYARDEFTNTCPADQEIEHAYSDVAKRMK.

Residues 1-13 (MAEAAEPEGVAPG) show a composition bias toward low complexity. Positions 1 to 446 (MAEAAEPEGV…EDGEASEPRA (446 aa)) are disordered. Acidic residues predominate over residues 39–48 (EGPEGSEGAE). Ser44 bears the Phosphoserine mark. Positions 67–83 (RGPEAEARGTRGAHGET) are enriched in basic and acidic residues. Over residues 90-100 (PEGAEVPQGGE) the composition is skewed to low complexity. The segment covering 121-147 (PRGEAQREPEDSAAPERQEEAEQRPEV) has biased composition (basic and acidic residues). 13 consecutive repeat copies span residues 157–166 (GDSVDAEGPL), 167–176 (GDNIEAEGPA), 177–186 (GDSVEAEGRV), 187–196 (GDSVDAEGPA), 197–206 (GDSVDAEGPL), 207–216 (GDNIQAEGPA), 217–226 (GDSVDAEGRV), 227–236 (GDSVDAEGPA), 237–246 (GDSVDAEGRV), 247–256 (GDSVEAGDPA), 257–266 (GDGVEAGVPA), 267–276 (GDSVEAEGPA), and 277–286 (GDSMDAEGPA). Residues 157–282 (GDSVDAEGPL…EGPAGDSMDA (126 aa)) are 13 X 10 AA tandem repeat of G-D-[SNG]-[VIM]-[DEQ]-A-[EAG]-[GDVE]-[PRG]-[LAVP]. Residues 295–306 (EPQQSGDGSLSP) show a composition bias toward polar residues. Composition is skewed to basic and acidic residues over residues 350-360 (ARADAGEDRVG) and 371-385 (EERRERSPEGPREEE). 2 positions are modified to phosphoserine: Ser397 and Ser442. A compositionally biased stretch (basic and acidic residues) spans 434-446 (GRREDGEASEPRA). The short motif at 487 to 490 (CPFS) is the G-site element. A helical transmembrane segment spans residues 489–509 (FSQRLFMILWLKGVIFNVTTV). Residues 556 to 704 (YPKLGTQHPE…AYSDVAKRMK (149 aa)) enclose the GST C-terminal domain.

Belongs to the chloride channel CLIC family. As to quaternary structure, monomer (soluble state). Interacts with dopamine receptors DRD2, DRD3 and DRD4. In terms of processing, phosphorylated. As to expression, expressed in brain, placenta, pancreas, liver, lung, heart, kidney, liver, spleen, soleus muscle, and brown fat.

The protein localises to the cytoplasm. It is found in the cell membrane. The catalysed reaction is chloride(in) = chloride(out). Its activity is regulated as follows. Channel activity is redox- and pH-regulated. Inhibited by IAA-94. Functionally, in the soluble state, catalyzes glutaredoxin-like thiol disulfide exchange reactions with reduced glutathione as electron donor. Can insert into membranes and form voltage-dependent chloride-selective channels. The channel opens upon membrane depolarization at positive voltages and closes at negative membrane voltages. May play a critical role in water-secreting cells, possibly through the regulation of chloride ion transport. The polypeptide is Chloride intracellular channel protein 6 (Homo sapiens (Human)).